The primary structure comprises 106 residues: Protein yippee-like At4g27745 (106 aa).

One can recognise a Yippee domain in the interval 8–105 (RLYSCCNCRN…FEKAKIVKED (98 aa)). Positions 12, 15, 68, and 71 each coordinate Zn(2+).

Belongs to the yippee family.

The protein is Protein yippee-like At4g27745 of Arabidopsis thaliana (Mouse-ear cress).